A 158-amino-acid polypeptide reads, in one-letter code: Large ribosomal subunit protein uL30 (158 aa).

This sequence belongs to the universal ribosomal protein uL30 family. In terms of assembly, part of the 50S ribosomal subunit.

In Saccharolobus solfataricus (strain ATCC 35092 / DSM 1617 / JCM 11322 / P2) (Sulfolobus solfataricus), this protein is Large ribosomal subunit protein uL30.